The chain runs to 166 residues: Large ribosomal subunit protein uL10 (166 aa).

It belongs to the universal ribosomal protein uL10 family. In terms of assembly, part of the ribosomal stalk of the 50S ribosomal subunit. The N-terminus interacts with L11 and the large rRNA to form the base of the stalk. The C-terminus forms an elongated spine to which L12 dimers bind in a sequential fashion forming a multimeric L10(L12)X complex.

Forms part of the ribosomal stalk, playing a central role in the interaction of the ribosome with GTP-bound translation factors. The sequence is that of Large ribosomal subunit protein uL10 from Ureaplasma urealyticum serovar 10 (strain ATCC 33699 / Western).